Here is a 493-residue protein sequence, read N- to C-terminus: GTPase Der (493 aa).

In terms of domain architecture, EngA-type G 1 spans 3-166 (PVIALVGRPN…EALGIFPKDN (164 aa)). Residues 9 to 16 (GRPNVGKS), 56 to 60 (DTGGI), and 118 to 121 (NKVD) each bind GTP. A compositionally biased stretch (acidic residues) spans 167-184 (VEEEGEGEPASEEVAEGE). The tract at residues 167-195 (VEEEGEGEPASEEVAEGEEPTRIPGPSEK) is disordered. Residues 198 to 371 (IKIAIIGRPN…SVQESFRSAV (174 aa)) enclose the EngA-type G 2 domain. Residues 204–211 (GRPNVGKS), 251–255 (DTAGV), and 316–319 (NKWD) contribute to the GTP site. A KH-like domain is found at 372–456 (TRWPTSRLTS…PIRIEYKGGE (85 aa)). Over residues 454–463 (GGENPYEGKK) the composition is skewed to basic and acidic residues. Positions 454–493 (GGENPYEGKKNSLTARQVNKKRRLMSHHKKAEKKKKDKRR) are disordered. Basic residues predominate over residues 471-493 (VNKKRRLMSHHKKAEKKKKDKRR).

Belongs to the TRAFAC class TrmE-Era-EngA-EngB-Septin-like GTPase superfamily. EngA (Der) GTPase family. Associates with the 50S ribosomal subunit.

Its function is as follows. GTPase that plays an essential role in the late steps of ribosome biogenesis. The sequence is that of GTPase Der from Pseudomonas aeruginosa (strain LESB58).